The primary structure comprises 91 residues: DNA-directed RNA polymerase subunit omega (91 aa).

It belongs to the RNA polymerase subunit omega family. The RNAP catalytic core consists of 2 alpha, 1 beta, 1 beta' and 1 omega subunit. When a sigma factor is associated with the core the holoenzyme is formed, which can initiate transcription.

The catalysed reaction is RNA(n) + a ribonucleoside 5'-triphosphate = RNA(n+1) + diphosphate. Promotes RNA polymerase assembly. Latches the N- and C-terminal regions of the beta' subunit thereby facilitating its interaction with the beta and alpha subunits. The sequence is that of DNA-directed RNA polymerase subunit omega from Erwinia tasmaniensis (strain DSM 17950 / CFBP 7177 / CIP 109463 / NCPPB 4357 / Et1/99).